The primary structure comprises 278 residues: TnpB-like protein MJ0751 (278 aa).

Zn(2+) contacts are provided by cysteine 222, cysteine 225, cysteine 239, and cysteine 242.

It in the N-terminal section; belongs to the transposase 2 family. In the C-terminal section; belongs to the transposase 35 family.

In Methanocaldococcus jannaschii (strain ATCC 43067 / DSM 2661 / JAL-1 / JCM 10045 / NBRC 100440) (Methanococcus jannaschii), this protein is TnpB-like protein MJ0751.